Reading from the N-terminus, the 578-residue chain is Cyclin-SDS (578 aa).

Residues 1–31 are disordered; that stretch reads MKEIAMRNSKRKPEPTPFAGKKLRSTRLRRK. Residues 21-31 show a composition bias toward basic residues; sequence KKLRSTRLRRK.

Belongs to the cyclin family. May interact with CDKA-1 and CDKB1-1.

Meiosis-specific cyclin. Required for normal homolog synapsis and recombination in early to mid-prophase 1. May regulate the timing of sister chromatid separation. This Arabidopsis thaliana (Mouse-ear cress) protein is Cyclin-SDS (SDS).